The primary structure comprises 183 residues: uncharacterized protein (183 aa).

It to M.leprae ML2442.

This is an uncharacterized protein from Mycobacterium tuberculosis (strain CDC 1551 / Oshkosh).